The primary structure comprises 81 residues: Sulfur carrier protein TusA (81 aa).

C19 functions as the Cysteine persulfide intermediate in the catalytic mechanism.

The protein belongs to the sulfur carrier protein TusA family. Interacts with IscS.

It localises to the cytoplasm. It functions in the pathway tRNA modification. Sulfur carrier protein involved in sulfur trafficking in the cell. Part of a sulfur-relay system required for 2-thiolation during synthesis of 2-thiouridine of the modified wobble base 5-methylaminomethyl-2-thiouridine (mnm(5)s(2)U) in tRNA. Interacts with IscS and stimulates its cysteine desulfurase activity. Accepts an activated sulfur from IscS, which is then transferred to TusD, and thus determines the direction of sulfur flow from IscS to 2-thiouridine formation. Also appears to be involved in sulfur transfer for the biosynthesis of molybdopterin. The sequence is that of Sulfur carrier protein TusA from Salmonella choleraesuis (strain SC-B67).